The primary structure comprises 177 residues: Large ribosomal subunit protein uL6 (177 aa).

Belongs to the universal ribosomal protein uL6 family. Part of the 50S ribosomal subunit.

Its function is as follows. This protein binds to the 23S rRNA, and is important in its secondary structure. It is located near the subunit interface in the base of the L7/L12 stalk, and near the tRNA binding site of the peptidyltransferase center. In Polynucleobacter asymbioticus (strain DSM 18221 / CIP 109841 / QLW-P1DMWA-1) (Polynucleobacter necessarius subsp. asymbioticus), this protein is Large ribosomal subunit protein uL6.